A 176-amino-acid polypeptide reads, in one-letter code: NAD(P)H-quinone oxidoreductase subunit 6, chloroplastic (176 aa).

The next 5 helical transmembrane spans lie at 10-30 (FLLV…VLLP), 32-52 (PIYS…FYIL), 61-81 (AQLL…VMFI), 92-112 (LWTV…VSLI), and 152-172 (FFLP…GAIA).

Belongs to the complex I subunit 6 family. NDH is composed of at least 16 different subunits, 5 of which are encoded in the nucleus.

The protein localises to the plastid. It localises to the chloroplast thylakoid membrane. The enzyme catalyses a plastoquinone + NADH + (n+1) H(+)(in) = a plastoquinol + NAD(+) + n H(+)(out). It catalyses the reaction a plastoquinone + NADPH + (n+1) H(+)(in) = a plastoquinol + NADP(+) + n H(+)(out). Its function is as follows. NDH shuttles electrons from NAD(P)H:plastoquinone, via FMN and iron-sulfur (Fe-S) centers, to quinones in the photosynthetic chain and possibly in a chloroplast respiratory chain. The immediate electron acceptor for the enzyme in this species is believed to be plastoquinone. Couples the redox reaction to proton translocation, and thus conserves the redox energy in a proton gradient. This chain is NAD(P)H-quinone oxidoreductase subunit 6, chloroplastic (ndhG), found in Lactuca sativa (Garden lettuce).